Reading from the N-terminus, the 225-residue chain is Thymidine kinase (225 aa).

8-15 provides a ligand contact to ATP; sequence GPMFSGKT. The active-site Proton acceptor is the Glu-92. Tyr-122 lines the substrate pocket. Zn(2+) is bound by residues Cys-147 and Cys-150. Substrate is bound at residue 167–171; the sequence is KILVG. Residues Cys-180 and Cys-183 each coordinate Zn(2+). The segment covering 197–207 has biased composition (polar residues); sequence SEQINNQTELS. The interval 197 to 225 is disordered; that stretch reads SEQINNQTELSEPTRQKESLKIKKRRIDS. Residues 208–225 are compositionally biased toward basic and acidic residues; that stretch reads EPTRQKESLKIKKRRIDS.

Belongs to the thymidine kinase family.

The enzyme catalyses thymidine + ATP = dTMP + ADP + H(+). The protein is Thymidine kinase (TK) of Acanthamoeba polyphaga mimivirus (APMV).